We begin with the raw amino-acid sequence, 222 residues long: Cytochrome b6 (222 aa).

The chain crosses the membrane as a helical span at residues 39–59; sequence IFYCLGGLTLTCFLIQFATGF. Tyrosine 41 is a binding site for heme b. Cysteine 42 is a binding site for heme c. Heme b-binding residues include arginine 90, histidine 93, arginine 94, histidine 107, and arginine 110. Transmembrane regions (helical) follow at residues 97-117, 123-143, and 193-213; these read ASMM…TGGF, LTWV…VTGY, and LHTF…FLMI. Residues histidine 194 and histidine 209 each coordinate heme b. Residues arginine 214 and isoleucine 218 each contribute to the heme c site. Serine 219 is a heme b binding site.

Belongs to the cytochrome b family. PetB subfamily. The 4 large subunits of the cytochrome b6-f complex are cytochrome b6, subunit IV (17 kDa polypeptide, PetD), cytochrome f and the Rieske protein, while the 4 small subunits are PetG, PetL, PetM and PetN. The complex functions as a dimer. Heme b serves as cofactor. Heme c is required as a cofactor.

The protein localises to the cellular thylakoid membrane. Functionally, component of the cytochrome b6-f complex, which mediates electron transfer between photosystem II (PSII) and photosystem I (PSI), cyclic electron flow around PSI, and state transitions. In Synechocystis sp. (strain ATCC 27184 / PCC 6803 / Kazusa), this protein is Cytochrome b6.